A 619-amino-acid polypeptide reads, in one-letter code: MVSKLSLFRANSLPFPVISSYSARFILKPYPKPKTLIFCVFSSNLSSTTFPYGPSLLKGKKPVLDDIRLASIGRDRDAHRGKIGEFDESIEKDVLLNEDEFTRVFEISAIRVPAKDCFALENRLRGHLLNWPRIRNIARVPGDEIEEDVVKLLGRETDEEEEDEDSVVDSVNRRIRGKAEGDGERLSSVLHRDKLARTFNSTGYLKFRNLAKISRPKRKRKTERTREGKEKEIASRRNEMAVVEVVETRGGEEDFEGLLGEGYGSRGRWRGSTRLLLLDEKYSGEEVQDLPEAIKVLFAEAKMADASLSFELVKCRLTLFYDYWPMIEILEAVLPKGMIVPSAFEMVGHIAHLNLRDEHLPYKRLIAKVVLDKNQPKIQTVVNKIDPIHNDFRTMQLEVLAGNHSLVTLVVENGLRFHVDLARVYWNSKLGTERQRLLLGFDQNDVVCDVFAGVGPIALAAARIVKRVYANDLNPHAVEFMEQNSVVNKLEKRIEIFNMDGRRFIKAMFSSEKGQKVTQVVMNLPKDAAESLDAFRGVYNDRHRDEGLSFPTIHVYGFSKASDPEFDFHERIRIALSEVAVDVKMRKVRLVAPGKWMLCASFILPKNVAFSRKNLSYVD.

The N-terminal 10 residues, 1-10 (MVSKLSLFRA), are a transit peptide targeting the mitochondrion. S-adenosyl-L-methionine contacts are provided by residues arginine 434, 472–473 (DL), 500–501 (DG), and asparagine 523.

The protein belongs to the class I-like SAM-binding methyltransferase superfamily. TRM5/TYW2 family. Monomer.

The protein resides in the mitochondrion matrix. It localises to the nucleus. It is found in the cytoplasm. It carries out the reaction guanosine(37) in tRNA + S-adenosyl-L-methionine = N(1)-methylguanosine(37) in tRNA + S-adenosyl-L-homocysteine + H(+). Its function is as follows. Specifically methylates the N1 position of guanosine-37 in various cytoplasmic and mitochondrial tRNAs. Methylation is not dependent on the nature of the nucleoside 5' of the target nucleoside. This is the first step in the biosynthesis of wybutosine (yW), a modified base adjacent to the anticodon of tRNAs and required for accurate decoding. In Arabidopsis thaliana (Mouse-ear cress), this protein is tRNA (guanine(37)-N(1))-methyltransferase 2.